The chain runs to 451 residues: Trigger factor (451 aa).

Residues 165–250 (DDKLTIDFEG…LHQIQVREAL (86 aa)) form the PPIase FKBP-type domain.

Belongs to the FKBP-type PPIase family. Tig subfamily.

Its subcellular location is the cytoplasm. The enzyme catalyses [protein]-peptidylproline (omega=180) = [protein]-peptidylproline (omega=0). Involved in protein export. Acts as a chaperone by maintaining the newly synthesized protein in an open conformation. Functions as a peptidyl-prolyl cis-trans isomerase. This chain is Trigger factor, found in Helicobacter pylori (strain P12).